The following is a 541-amino-acid chain: Pseudokinase FAM20A (541 aa).

The signal sequence occupies residues 1-33; the sequence is MPGLRRDRLLALLLLGALFSADLYFHLWPQVQR. Asn-70, Asn-145, and Asn-287 each carry an N-linked (GlcNAc...) asparagine glycan. Disulfide bonds link Cys-314-Cys-330, Cys-319-Cys-323, Cys-378-Cys-452, and Cys-453-Cys-512. The N-linked (GlcNAc...) asparagine glycan is linked to Asn-388. A glycan (N-linked (GlcNAc...) asparagine) is linked at Asn-538.

The protein belongs to the FAM20 family. Interacts with FAM20C; probably forming a heterotetramer of 2 subunits of FAM20A and 2 subunits of FAM20C. Post-translationally, N-glycosylated. In terms of tissue distribution, in the mammary gland, expressed at higher levels in lactating mice than in virgin mice. Observed throughout the tissues of the mandibular incisor, including the secretory and maturation stage ameloblasts, the suprabasal layers of the gingival epithelium and the odontoblasts. Weak expression in the enamel matrix.

Its subcellular location is the secreted. It is found in the golgi apparatus. It localises to the endoplasmic reticulum. Functionally, pseudokinase that acts as an allosteric activator of the Golgi serine/threonine protein kinase FAM20C and is involved in biomineralization of teeth. Forms a complex with FAM20C and increases the ability of FAM20C to phosphorylate the proteins that form the 'matrix' that guides the deposition of the enamel minerals. In Mus musculus (Mouse), this protein is Pseudokinase FAM20A.